The sequence spans 151 residues: SsrA-binding protein (151 aa).

This sequence belongs to the SmpB family.

The protein localises to the cytoplasm. In terms of biological role, required for rescue of stalled ribosomes mediated by trans-translation. Binds to transfer-messenger RNA (tmRNA), required for stable association of tmRNA with ribosomes. tmRNA and SmpB together mimic tRNA shape, replacing the anticodon stem-loop with SmpB. tmRNA is encoded by the ssrA gene; the 2 termini fold to resemble tRNA(Ala) and it encodes a 'tag peptide', a short internal open reading frame. During trans-translation Ala-aminoacylated tmRNA acts like a tRNA, entering the A-site of stalled ribosomes, displacing the stalled mRNA. The ribosome then switches to translate the ORF on the tmRNA; the nascent peptide is terminated with the 'tag peptide' encoded by the tmRNA and targeted for degradation. The ribosome is freed to recommence translation, which seems to be the essential function of trans-translation. This chain is SsrA-binding protein, found in Wolinella succinogenes (strain ATCC 29543 / DSM 1740 / CCUG 13145 / JCM 31913 / LMG 7466 / NCTC 11488 / FDC 602W) (Vibrio succinogenes).